We begin with the raw amino-acid sequence, 261 residues long: Probable membrane transporter protein ORF9 (261 aa).

8 helical membrane passes run 8 to 28, 29 to 49, 78 to 98, 100 to 120, 133 to 151, 152 to 171, 189 to 209, and 231 to 251; these read LLAF…IAGG, GGMI…QTLG, LPMA…ATIV, GDVL…YFGL, VTPF…FYDG, VFGP…LAGF, VGAF…GLLM, and IIKP…LADP.

The protein belongs to the 4-toluene sulfonate uptake permease (TSUP) (TC 2.A.102) family.

It localises to the cell membrane. The chain is Probable membrane transporter protein ORF9 from Sinorhizobium sp.